The following is a 232-amino-acid chain: Lipoprotein-releasing system ATP-binding protein LolD (232 aa).

Residues 11 to 232 (IEVTDLQRAF…LHDGRLIEEY (222 aa)) form the ABC transporter domain. An ATP-binding site is contributed by 47–54 (GPSGAGKS).

Belongs to the ABC transporter superfamily. Lipoprotein translocase (TC 3.A.1.125) family. The complex is composed of two ATP-binding proteins (LolD) and two transmembrane proteins (LolC and LolE).

The protein resides in the cell inner membrane. Its function is as follows. Part of the ABC transporter complex LolCDE involved in the translocation of mature outer membrane-directed lipoproteins, from the inner membrane to the periplasmic chaperone, LolA. Responsible for the formation of the LolA-lipoprotein complex in an ATP-dependent manner. In Zymomonas mobilis subsp. mobilis (strain ATCC 10988 / DSM 424 / LMG 404 / NCIMB 8938 / NRRL B-806 / ZM1), this protein is Lipoprotein-releasing system ATP-binding protein LolD.